Consider the following 596-residue polypeptide: Heat shock factor protein 5 (596 aa).

A DNA-binding region spans residues 10–200 (NPNNFPAKLW…FHRSFRRDSL (191 aa)). The disordered stretch occupies residues 541–576 (EMGPASKPSEDTGLATPARYREHRSNSQQGKSPDLH). Position 572 is a phosphoserine (Ser572).

This sequence belongs to the HSF family. As to quaternary structure, homooligomer.

The protein resides in the nucleus. Its subcellular location is the chromosome. Its function is as follows. DNA-binding transcription factor that is essential for male fertility, spermatogenesis and meiotic prophase progression in spermatocytes under non-stress conditions. Positvely and negatively regulates gene expression to ensure progression of meiotic prophase beyond pachytene stage in spermatocytes. Plays a role in male germline meiotic sex chromosome remodeling and silencing through regulation of SMARCA4. In Homo sapiens (Human), this protein is Heat shock factor protein 5 (HSF5).